Consider the following 89-residue polypeptide: Small ribosomal subunit protein uS15 (89 aa).

The protein belongs to the universal ribosomal protein uS15 family. In terms of assembly, part of the 30S ribosomal subunit. Forms a bridge to the 50S subunit in the 70S ribosome, contacting the 23S rRNA.

Functionally, one of the primary rRNA binding proteins, it binds directly to 16S rRNA where it helps nucleate assembly of the platform of the 30S subunit by binding and bridging several RNA helices of the 16S rRNA. In terms of biological role, forms an intersubunit bridge (bridge B4) with the 23S rRNA of the 50S subunit in the ribosome. This Frankia alni (strain DSM 45986 / CECT 9034 / ACN14a) protein is Small ribosomal subunit protein uS15.